We begin with the raw amino-acid sequence, 115 residues long: Large ribosomal subunit protein uL18 (115 aa).

It belongs to the universal ribosomal protein uL18 family. Part of the 50S ribosomal subunit; part of the 5S rRNA/L5/L18/L25 subcomplex. Contacts the 5S and 23S rRNAs.

This is one of the proteins that bind and probably mediate the attachment of the 5S RNA into the large ribosomal subunit, where it forms part of the central protuberance. The chain is Large ribosomal subunit protein uL18 from Rickettsia rickettsii (strain Iowa).